A 249-amino-acid polypeptide reads, in one-letter code: Triosephosphate isomerase (249 aa).

The substrate site is built by asparagine 12 and lysine 14. An N6-acetyllysine modification is found at lysine 14. 3'-nitrotyrosine is present on tyrosine 68. Residues serine 80 and serine 106 each carry the phosphoserine modification. Lysine 142 is covalently cross-linked (Glycyl lysine isopeptide (Lys-Gly) (interchain with G-Cter in SUMO1)). Lysine 149 is modified (N6-succinyllysine). Lysine 156 bears the N6-acetyllysine; alternate mark. The residue at position 156 (lysine 156) is an N6-succinyllysine; alternate. Serine 159 carries the phosphoserine modification. Glutamate 166 acts as the Proton acceptor in catalysis. Threonine 173 bears the Phosphothreonine mark. Lysine 194 carries the post-translational modification N6-acetyllysine; alternate. N6-succinyllysine; alternate is present on lysine 194. Lysine 194 is subject to N6-methyllysine; alternate. Position 198 is a phosphoserine (serine 198). Position 209 is a 3'-nitrotyrosine (tyrosine 209). Position 212 is a phosphoserine (serine 212). Position 214 is a phosphothreonine (threonine 214). A Phosphoserine modification is found at serine 223. Lysine 238 carries the post-translational modification N6-acetyllysine.

This sequence belongs to the triosephosphate isomerase family. Homodimer.

It is found in the cytoplasm. The catalysed reaction is D-glyceraldehyde 3-phosphate = dihydroxyacetone phosphate. The enzyme catalyses dihydroxyacetone phosphate = methylglyoxal + phosphate. Its pathway is carbohydrate biosynthesis; gluconeogenesis. The protein operates within carbohydrate degradation; glycolysis; D-glyceraldehyde 3-phosphate from glycerone phosphate: step 1/1. Functionally, triosephosphate isomerase is an extremely efficient metabolic enzyme that catalyzes the interconversion between dihydroxyacetone phosphate (DHAP) and D-glyceraldehyde-3-phosphate (G3P) in glycolysis and gluconeogenesis. In terms of biological role, it is also responsible for the non-negligible production of methylglyoxal a reactive cytotoxic side-product that modifies and can alter proteins, DNA and lipids. This is Triosephosphate isomerase from Mesocricetus auratus (Golden hamster).